The sequence spans 231 residues: Killer cell lectin-like receptor subfamily F member 1 (231 aa).

Topologically, residues 1–38 (MQDEERYMTLNVQSKKRTSTQTTQLTFKDYSVVLHWYK) are cytoplasmic. A Phosphotyrosine modification is found at Y7. The chain crosses the membrane as a helical; Signal-anchor for type II membrane protein span at residues 39–59 (ILLGISGTLNGILALALISLI). Residues 60–231 (LLVSQGVLLK…SSVFKWICQY (172 aa)) lie on the Extracellular side of the membrane. N77, N91, N96, and N176 each carry an N-linked (GlcNAc...) asparagine glycan. The C-type lectin domain occupies 121 to 230 (YRGKCYWFSN…CSSVFKWICQ (110 aa)). Intrachain disulfides connect C142-C229 and C208-C221.

In terms of assembly, homodimer. Interacts with CLEC2B. Post-translationally, phosphorylated on Tyr-7; this phosphorylation is required for NKp80/KLRF1-mediated cytotoxicity.

It localises to the membrane. Its function is as follows. Functions as an activating receptor involved in immunosurveillance upon binding to various ligands displayed at the surface of myeloid cells. Upon interaction with CLEC2B ligand, stimulates NK-cell cytotoxicity and cytokine production leading to the cytolysis of malignant CLEC2B-expressing myeloid cells. Actviation of the common cytotoxicity pathway involves SRC and SYK kinases. The polypeptide is Killer cell lectin-like receptor subfamily F member 1 (KLRF1) (Macaca fascicularis (Crab-eating macaque)).